A 369-amino-acid polypeptide reads, in one-letter code: Thyroid hormone receptor beta (369 aa).

The tract at residues 1-14 (MSGYIPSYLDKDEL) is modulating. Zn(2+) is bound by residues Cys-15, Cys-18, Cys-32, Cys-35, Cys-53, Cys-59, Cys-69, and Cys-72. 2 NR C4-type zinc fingers span residues 15–35 (CVVC…CEGC) and 53–77 (CKYE…FKKC). Positions 15–89 (CVVCGDKATG…VGMATDLVLD (75 aa)) form a DNA-binding region, nuclear receptor. The region spanning 125 to 369 (EEWELIKIVT…PPLFLEVFED (245 aa)) is the NR LBD domain. Residues Arg-190, Asn-239, and His-343 each coordinate 3,3',5-triiodo-L-thyronine. The L-thyroxine site is built by Arg-190, Asn-239, and His-343.

Belongs to the nuclear hormone receptor family. NR1 subfamily.

The protein localises to the nucleus. Functionally, nuclear hormone receptor that can act as a repressor or activator of transcription. High affinity receptor for thyroid hormones, including triiodothyronine and thyroxine. This Cairina moschata (Muscovy duck) protein is Thyroid hormone receptor beta (THRB).